We begin with the raw amino-acid sequence, 90 residues long: UPF0335 protein RPB_1426 (90 aa).

The protein belongs to the UPF0335 family.

The chain is UPF0335 protein RPB_1426 from Rhodopseudomonas palustris (strain HaA2).